The sequence spans 92 residues: Probable Fe(2+)-trafficking protein (92 aa).

It belongs to the Fe(2+)-trafficking protein family.

Functionally, could be a mediator in iron transactions between iron acquisition and iron-requiring processes, such as synthesis and/or repair of Fe-S clusters in biosynthetic enzymes. This chain is Probable Fe(2+)-trafficking protein, found in Shewanella pealeana (strain ATCC 700345 / ANG-SQ1).